The sequence spans 171 residues: 3-hydroxydecanoyl-[acyl-carrier-protein] dehydratase (171 aa).

His70 is an active-site residue.

The protein belongs to the thioester dehydratase family. FabA subfamily. As to quaternary structure, homodimer.

The protein localises to the cytoplasm. It catalyses the reaction a (3R)-hydroxyacyl-[ACP] = a (2E)-enoyl-[ACP] + H2O. It carries out the reaction (3R)-hydroxydecanoyl-[ACP] = (2E)-decenoyl-[ACP] + H2O. The catalysed reaction is (2E)-decenoyl-[ACP] = (3Z)-decenoyl-[ACP]. Its pathway is lipid metabolism; fatty acid biosynthesis. Its function is as follows. Necessary for the introduction of cis unsaturation into fatty acids. Catalyzes the dehydration of (3R)-3-hydroxydecanoyl-ACP to E-(2)-decenoyl-ACP and then its isomerization to Z-(3)-decenoyl-ACP. Can catalyze the dehydratase reaction for beta-hydroxyacyl-ACPs with saturated chain lengths up to 16:0, being most active on intermediate chain length. This is 3-hydroxydecanoyl-[acyl-carrier-protein] dehydratase from Shewanella baltica (strain OS223).